A 180-amino-acid polypeptide reads, in one-letter code: Cell number regulator 7 (180 aa).

Residues A80–S102 form a helical membrane-spanning segment.

This sequence belongs to the cornifelin family. As to expression, expressed in roots, leaves, immature ears and silks. Detected preferentially in silks.

Its subcellular location is the membrane. This is Cell number regulator 7 (CNR7) from Zea mays (Maize).